A 201-amino-acid polypeptide reads, in one-letter code: Peroxiredoxin 2 (201 aa).

A Thioredoxin domain is found at 3–156 (VYLGKRAPDF…ILRSVKALQA (154 aa)). The Cysteine sulfenic acid (-SOH) intermediate role is filled by C44. Residue R119 participates in substrate binding.

This sequence belongs to the peroxiredoxin family. Prx6 subfamily. Homodecamer. Pentamer of dimers that assemble into a ring structure.

The protein resides in the cytoplasm. The catalysed reaction is a hydroperoxide + [thioredoxin]-dithiol = an alcohol + [thioredoxin]-disulfide + H2O. Functionally, thiol-specific peroxidase that catalyzes the reduction of hydrogen peroxide and organic hydroperoxides to water and alcohols, respectively. Plays a role in cell protection against oxidative stress by detoxifying peroxides. The chain is Peroxiredoxin 2 from Picrophilus torridus (strain ATCC 700027 / DSM 9790 / JCM 10055 / NBRC 100828 / KAW 2/3).